The following is a 420-amino-acid chain: MALIRRVALLSLHTSPMEQPGSGDAGGMNVYIRELASALAEAGVEVEIFTRATSASQPAVEHPDPGVCVHNVLAGPTKKIPKEELPGLLHSMVEEIEQIRRRQPHGRYDVIHSHYWVSGIAGLELSELWGVPLVHTMHTMAKVKNLLLESGEQPEPRRREVGEHRIVDGAARLIANTSSEAAELVSHYGADYDRIDIAPPGVDLATFTPAFRTKARRDHGVDPGTFHLLFAGRIQRLKGPQVLVKAAALLRQRRPDIDLRLTILGELSGNKEFNLRKLVADAEMDDVVTQLPPVTAPELAAWFRAADVVVMPSFSESFGLVALEAQACGTPVVATRVGGLSRAIFHGRTGLLVDGHHAADWADAFEALYDDPATRVDMGRAAAIRAQNSGWSRTAAITLESYHAAVDRHVGHLVPAVPVT.

Residue His13 participates in 1D-myo-inositol 3-phosphate binding. UDP-N-acetyl-alpha-D-glucosamine is bound by residues 19-20 (QP) and Gly27. 1D-myo-inositol 3-phosphate is bound by residues 24-29 (DAGGMN), Lys82, Tyr115, Thr139, and Arg159. The UDP-N-acetyl-alpha-D-glucosamine site is built by Arg233, Lys238, and Val294. Positions 303, 304, and 306 each coordinate Mg(2+). Positions 316 and 324 each coordinate UDP-N-acetyl-alpha-D-glucosamine. Residue Thr330 coordinates Mg(2+).

It belongs to the glycosyltransferase group 1 family. MshA subfamily. Homodimer.

The catalysed reaction is 1D-myo-inositol 3-phosphate + UDP-N-acetyl-alpha-D-glucosamine = 1D-myo-inositol 2-acetamido-2-deoxy-alpha-D-glucopyranoside 3-phosphate + UDP + H(+). Functionally, catalyzes the transfer of a N-acetyl-glucosamine moiety to 1D-myo-inositol 3-phosphate to produce 1D-myo-inositol 2-acetamido-2-deoxy-glucopyranoside 3-phosphate in the mycothiol biosynthesis pathway. In Pseudarthrobacter chlorophenolicus (strain ATCC 700700 / DSM 12829 / CIP 107037 / JCM 12360 / KCTC 9906 / NCIMB 13794 / A6) (Arthrobacter chlorophenolicus), this protein is D-inositol 3-phosphate glycosyltransferase.